An 87-amino-acid chain; its full sequence is Small polypeptide DEVIL 11 (87 aa).

Polar residues predominate over residues 1 to 11 (MASSSSLTRSG). The tract at residues 1–47 (MASSSSLTRSGSVHLDEKWKLSKKDGGASRITRSSSTSSSSFNGKKQ) is disordered. A compositionally biased stretch (basic and acidic residues) spans 14–27 (HLDEKWKLSKKDGG). A compositionally biased stretch (low complexity) spans 29–41 (SRITRSSSTSSSS). The segment at 51 to 82 (AFTRKCARLVKEQRARFYIMRRCVIMLICWRD) is required for DVL/RTFL small polypeptide activity. Residues 64–80 (RARFYIMRRCVIMLICW) form a helical membrane-spanning segment. Asn-83 is a glycosylation site (N-linked (GlcNAc...) asparagine).

Belongs to the DVL/RTFL small polypeptides family.

It is found in the cell membrane. Functionally, small polypeptide acting as a regulatory molecule which coordinates cellular responses required for differentiation, growth and development, probably by restricting polar cell proliferation in lateral organs and coordinating socket cell recruitment and differentiation at trichome sites. In Arabidopsis thaliana (Mouse-ear cress), this protein is Small polypeptide DEVIL 11.